A 304-amino-acid polypeptide reads, in one-letter code: bZIP transcription factor 50 (304 aa).

Over 1–222 (MDVEFFADLD…MQESAVLTET (222 aa)) the chain is Cytoplasmic. 2 disordered regions span residues 26 to 60 (GSGVSGLFAPSPPHDAEAGSPESVSSRRPSPSREA) and 94 to 163 (GEEE…ERKK). Over residues 45–59 (SPESVSSRRPSPSRE) the composition is skewed to low complexity. Over residues 127-139 (EKEDVEAEVDGDD) the composition is skewed to acidic residues. One can recognise a bZIP domain in the interval 141 to 203 (MSKKKRRQMR…NMALRQSLLK (63 aa)). Positions 143-167 (KKKRRQMRNRDSAMKSRERKKMYVK) are basic motif. A compositionally biased stretch (basic and acidic residues) spans 150-163 (RNRDSAMKSRERKK). Positions 169–183 (LETKSKYLEAECRRL) are leucine-zipper. A helical membrane pass occupies residues 223-243 (LPLVSLLWLVSIVCLLPVPGL). The Lumenal portion of the chain corresponds to 244-304 (PNRNPVARSS…GPFRLAAAAC (61 aa)).

Belongs to the bZIP family.

The protein localises to the endoplasmic reticulum membrane. It is found in the nucleus. Transcriptionally activated by IRE1 in response to endoplasmic reticulum (ER) stress. IRE1 cleaves a 20-bp fragment causing a frameshift of the mRNA transcript, leading to a nuclear isoform of the BZIP50 activator. Its function is as follows. Transcription factor involved in endoplasmic reticulum (ER) stress response. Acts downstream of the ER stress sensors IRE1, BZIP39 and BZIP60 to activate BiP chaperone genes. This chain is bZIP transcription factor 50, found in Oryza sativa subsp. japonica (Rice).